A 253-amino-acid chain; its full sequence is uncharacterized protein (253 aa).

The protein belongs to the methyltransferase superfamily.

This is an uncharacterized protein from Mycobacterium avium (strain 104).